A 128-amino-acid chain; its full sequence is UPF0212 protein TGAM_1344 (128 aa).

Belongs to the UPF0212 family.

This is UPF0212 protein TGAM_1344 from Thermococcus gammatolerans (strain DSM 15229 / JCM 11827 / EJ3).